The primary structure comprises 313 residues: E3 ubiquitin-protein ligase RNF126 (313 aa).

The residue at position 2 (Ala-2) is an N-acetylalanine. Phosphoserine is present on Ser-5. Positions 5 to 100 (SPQPGRYFCH…FEIPTFPPGA (96 aa)) are required for interaction with BAG6. 4 residues coordinate Zn(2+): Cys-13, Cys-16, Cys-29, and Cys-32. The C4-type zinc-finger motif lies at 13-32 (CHCCSVEIVPRLPDYICPRC). 2 disordered regions span residues 42 to 63 (EETRNTENGSAPSTAPTDQNRQ) and 95 to 128 (TFPPGAQADDGRDPESRREREHQSRHRYGARQPR). Positions 47–63 (TENGSAPSTAPTDQNRQ) are enriched in polar residues. The span at 103–116 (DDGRDPESRREREH) shows a compositional bias: basic and acidic residues. Positions 117–128 (QSRHRYGARQPR) are enriched in basic residues. Residues 202-306 (TGPPPADKEK…SSSSSSSPSN (105 aa)) are sufficient for interaction with AICDA. Residues 231 to 272 (CPVCKEDYALGESVRQLPCNHLFHDSCIVPWLEQHDSCPVCR) form an RING-type zinc finger. The segment at 279 to 313 (NTATNPPGLTGVGFSSSSSSSSSSSPSNENATSNS) is disordered. Over residues 293–313 (SSSSSSSSSSSPSNENATSNS) the composition is skewed to low complexity.

Interacts with CCDC50, EGFR, FLT3 and SCAMP3. Interacts with BAG6 (via ubiquitin-like domain); required for BAG6-dependent ubiquitination of proteins mislocalized to the cytosol. Interacts with CDKN1A. Interacts with AICDA. In terms of processing, ubiquitinated. May undergo autoubiquitination. As to expression, detected in B-cells (at protein level).

The protein resides in the cytoplasm. The protein localises to the nucleus. It catalyses the reaction S-ubiquitinyl-[E2 ubiquitin-conjugating enzyme]-L-cysteine + [acceptor protein]-L-lysine = [E2 ubiquitin-conjugating enzyme]-L-cysteine + N(6)-ubiquitinyl-[acceptor protein]-L-lysine.. It functions in the pathway protein modification; protein ubiquitination. Its function is as follows. E3 ubiquitin-protein ligase that mediates ubiquitination oF target proteins. Depending on the associated E2 ligase, mediates 'Lys-27'-, 'Lys-29'-, 'Lys-48'- and/or 'Lys-63'-linked polyubiquitination of substrates. Part of a BAG6-dependent quality control process ensuring that proteins of the secretory pathway that are mislocalized to the cytosol are degraded by the proteasome. Probably acts by providing the ubiquitin ligase activity associated with the BAG6 complex and be responsible for ubiquitination of the hydrophobic mislocalized proteins and their targeting to the proteasome. May also play a role in the endosomal recycling of IGF2R, the cation-independent mannose-6-phosphate receptor. May play a role in the endosomal sorting and degradation of several membrane receptors including EGFR, FLT3, MET and CXCR4, by mediating their ubiquitination. By ubiquitinating CDKN1A/p21 and targeting it for degradation, may also promote cell proliferation. May monoubiquitinate AICDA. Acts as a regulator of DNA repair by mediating 'Lys-27'- and 'Lys-29'-linked polyubiquitination of MRE11, thereby promoting the exonuclease activity of MRE11. This is E3 ubiquitin-protein ligase RNF126 from Mus musculus (Mouse).